A 413-amino-acid polypeptide reads, in one-letter code: Docking protein 2 (413 aa).

Positions 4-114 constitute a PH domain; the sequence is VVVKQGFLYL…WIQAICLLAF (111 aa). Residues 147–252 form the IRS-type PTB domain; the sequence is PQKEFAVTVR…SAQKNAAPPG (106 aa). The disordered stretch occupies residues 247–292; it reads NAAPPGPQTQPVPVPAVLPRPESPYARPHDSLPPPSPTVPVPTPRQ. Over residues 250-268 the composition is skewed to pro residues; that stretch reads PPGPQTQPVPVPAVLPRPE. Position 271 is a phosphotyrosine (tyrosine 271). Pro residues predominate over residues 277–289; the sequence is SLPPPSPTVPVPT. A phosphotyrosine mark is found at tyrosine 300 and tyrosine 346. The segment covering 362–381 has biased composition (basic and acidic residues); that stretch reads QEPRGEAWRRQATADRDSSG. The disordered stretch occupies residues 362-383; that stretch reads QEPRGEAWRRQATADRDSSGLK.

This sequence belongs to the DOK family. Type A subfamily. As to quaternary structure, interacts with phosphorylated RASGAP and EGFR. Interacts with RET and NCK. Interacts (via PH domain) with TEK/TIE2 (tyrosine phosphorylated). In terms of processing, on immunoreceptor stimulation, phosphorylated on C-terminal tyrosine residues. Phosphorylation on Tyr-346 is required for binding to the SH2 domain of NCK. Phosphorylation on both Tyr-271 and Tyr-300 is required for interaction with RASGAP. Phosphorylated on tyrosine residues by TEK/TIE2.

In terms of biological role, DOK proteins are enzymatically inert adaptor or scaffolding proteins. They provide a docking platform for the assembly of multimolecular signaling complexes. DOK2 may modulate the cellular proliferation induced by IL-4, as well as IL-2 and IL-3. May be involved in modulating Bcr-Abl signaling. Attenuates EGF-stimulated MAP kinase activation. This chain is Docking protein 2 (DOK2), found in Bos taurus (Bovine).